Consider the following 141-residue polypeptide: HTH-type transcriptional repressor NsrR (141 aa).

In terms of domain architecture, HTH rrf2-type spans 2–129 (QLTSFTDYGL…DNYTLADLVE (128 aa)). The segment at residues 28-51 (ISEVTEVYGVSRNHMVKIINQLSR) is a DNA-binding region (H-T-H motif). [2Fe-2S] cluster is bound by residues C91, C96, and C102.

[2Fe-2S] cluster is required as a cofactor.

Nitric oxide-sensitive repressor of genes involved in protecting the cell against nitrosative stress. May require iron for activity. The protein is HTH-type transcriptional repressor NsrR of Klebsiella pneumoniae subsp. pneumoniae (strain ATCC 700721 / MGH 78578).